The sequence spans 184 residues: Photosystem I assembly protein Ycf4 (184 aa).

2 consecutive transmembrane segments (helical) span residues 21–43 (NFFW…SSSY) and 58–80 (VFIP…GFYL).

This sequence belongs to the Ycf4 family.

Its subcellular location is the plastid. The protein resides in the chloroplast thylakoid membrane. Seems to be required for the assembly of the photosystem I complex. This chain is Photosystem I assembly protein Ycf4, found in Psilotum nudum (Whisk fern).